A 932-amino-acid chain; its full sequence is Adhesion G protein-coupled receptor E2 (932 aa).

Positions 1–15 (MWGFWLLLFWGFSGT) are cleaved as a signal peptide. The Extracellular segment spans residues 16-652 (HRWGMTTLAI…TMEFSLYIIS (637 aa)). 2 consecutive EGF-like domains span residues 32–69 (GVNE…SNGQ) and 81–119 (DVNE…SAGG). Intrachain disulfides connect C36-C48, C42-C57, C85-C98, C92-C107, C137-C149, C143-C158, C160-C171, C177-C189, C183-C198, C226-C239, and C233-C248. Residues 133 to 172 (DVDECLTIGICPKNSNCSNSVGSYSCTCQSGFVSNGSTCE) form the EGF-like 3; calcium-binding domain. N148 and N167 each carry an N-linked (GlcNAc...) asparagine glycan. In terms of domain architecture, EGF-like 4; calcium-binding spans 173–210 (DEDECVTRNACPEHATCHNTLGSYYCTCNEGLEFSGGG). Residues 222–260 (DVDECSRNSTLCGPSFICINTLGSYSCSCPAGFSLSTFQ) enclose the EGF-like 5; calcium-binding domain. An N-linked (GlcNAc...) asparagine glycan is attached at N229. N-linked (GlcNAc...) asparagine glycosylation is found at N269, N283, N309, N333, N344, N363, N405, N417, N474, and N499. The region spanning 272–307 (DIDECDDICPSNSSCTNTLGSYFCTCHPGFASSNGQ) is the EGF-like 6; calcium-binding domain. 2 disulfide bridges follow: C276/C286 and C280/C295. One can recognise an EGF-like 7; calcium-binding domain in the interval 319 to 354 (DIDECTQDPFRCGRNSSCTNVPGSYNCSCLPDFRMD). Disulfide bonds link C323-C336 and C330-C345. Positions 482 to 643 (EYLEIESKVI…AIIMASGELT (162 aa)) constitute a GAIN-B domain. Residues 507–509 (RGD) carry the Cell attachment site motif. 2 disulfides stabilise this stretch: C596–C625 and C613–C627. Residues 596 to 643 (CVSWNTDVEDGRWTPSGCETVEASETHTVCSCNRMTNLAIIMASGELT) are GPS. Residues 653 to 673 (YVGTVISLVCLALAIATFLLF) form a helical membrane-spanning segment. At 674–681 (RAVQNHNT) the chain is on the cytoplasmic side. The chain crosses the membrane as a helical span at residues 682-702 (YLHLHLCVCLFLAKILFLTGI). Over 703-719 (DKTDNQTACAIIAGFLH) the chain is Extracellular. The N-linked (GlcNAc...) asparagine glycan is linked to N707. The helical transmembrane segment at 720–740 (YLFLACFFWMLVEAVMLFLMV) threads the bilayer. Over 741 to 756 (RNLKVVNYFSSRNIKM) the chain is Cytoplasmic. The helical transmembrane segment at 757 to 777 (LHLCAFGYGLPVVVVIISATV) threads the bilayer. Over 778–795 (HPWGYGMHNRCWLNTETG) the chain is Extracellular. A helical transmembrane segment spans residues 796 to 816 (FIWSFLGPVCMIITINSALLA). The Cytoplasmic segment spans residues 817-849 (WTLWVLRQKLCSVNSEVSKLKDTRLLTFKAIAQ). A helical transmembrane segment spans residues 850 to 870 (IFILGCSWVLGIFQIGPLASI). Residues 871 to 872 (MA) are Extracellular-facing. The helical transmembrane segment at 873–893 (YLFTTINSLQGAFIFLIHCLL) threads the bilayer. Topologically, residues 894-932 (NRQVRDEYRKLLTRKTDLSSHSQTSGILLSSMPSTSKTG) are cytoplasmic.

It belongs to the G-protein coupled receptor 2 family. Adhesion G-protein coupled receptor (ADGR) subfamily.

The protein resides in the cell membrane. Its function is as follows. Orphan receptor involved in cell adhesion and probably in cell-cell interactions involved specifically cells of the immune system. May play a role in regulatory T-cells (Treg) development. In Rattus norvegicus (Rat), this protein is Adhesion G protein-coupled receptor E2 (Adgre1).